The following is a 462-amino-acid chain: Tubby-like F-box protein 7 (462 aa).

Residues 54–109 (SKWAGLPPELLRDVMKRLEEDDSNWPSRKDVVACASVCTTWRDMCKDIVRNPEFCG) form the F-box domain. 2 disordered regions span residues 317–338 (FSEF…DDVN) and 383–418 (QPSS…SSSN). Over residues 383-417 (QPSSGAASEPSQAGQAAQQQTQPSQPSSSSSSSSS) the composition is skewed to low complexity.

The protein belongs to the TUB family. As to expression, ubiquitous.

The polypeptide is Tubby-like F-box protein 7 (TULP7) (Oryza sativa subsp. japonica (Rice)).